The primary structure comprises 167 residues: Phosphopantetheine adenylyltransferase (167 aa).

Ser9 serves as a coordination point for substrate. ATP-binding positions include Ser9 to Phe10 and His17. Positions 41, 78, and 92 each coordinate substrate. Residues Gly93 to Arg95, Glu103, and Ser128 to Thr134 contribute to the ATP site.

It belongs to the bacterial CoaD family. In terms of assembly, homohexamer. Mg(2+) is required as a cofactor.

The protein localises to the cytoplasm. The catalysed reaction is (R)-4'-phosphopantetheine + ATP + H(+) = 3'-dephospho-CoA + diphosphate. It participates in cofactor biosynthesis; coenzyme A biosynthesis; CoA from (R)-pantothenate: step 4/5. Reversibly transfers an adenylyl group from ATP to 4'-phosphopantetheine, yielding dephospho-CoA (dPCoA) and pyrophosphate. The chain is Phosphopantetheine adenylyltransferase from Rhizobium rhizogenes (strain K84 / ATCC BAA-868) (Agrobacterium radiobacter).